A 136-amino-acid polypeptide reads, in one-letter code: Large ribosomal subunit protein uL13 (136 aa).

This sequence belongs to the universal ribosomal protein uL13 family. As to quaternary structure, part of the 50S ribosomal subunit.

Functionally, this protein is one of the early assembly proteins of the 50S ribosomal subunit, although it is not seen to bind rRNA by itself. It is important during the early stages of 50S assembly. The sequence is that of Large ribosomal subunit protein uL13 from Thermoplasma acidophilum (strain ATCC 25905 / DSM 1728 / JCM 9062 / NBRC 15155 / AMRC-C165).